The primary structure comprises 194 residues: Holliday junction branch migration complex subunit RuvA (194 aa).

The tract at residues 1-64 (MIGRLRGILA…EDSVSLYGFL (64 aa)) is domain I. Positions 65–140 (REGERRLFRD…RAADFSSGAP (76 aa)) are domain II. Residues 140–144 (PITGQ) are flexible linker. The interval 145–194 (LGPDAVSEATVALQQLGYKPAEAARMARDAGAEGDEVATVIRKALQAALR) is domain III.

The protein belongs to the RuvA family. Homotetramer. Forms an RuvA(8)-RuvB(12)-Holliday junction (HJ) complex. HJ DNA is sandwiched between 2 RuvA tetramers; dsDNA enters through RuvA and exits via RuvB. An RuvB hexamer assembles on each DNA strand where it exits the tetramer. Each RuvB hexamer is contacted by two RuvA subunits (via domain III) on 2 adjacent RuvB subunits; this complex drives branch migration. In the full resolvosome a probable DNA-RuvA(4)-RuvB(12)-RuvC(2) complex forms which resolves the HJ.

The protein resides in the cytoplasm. Its function is as follows. The RuvA-RuvB-RuvC complex processes Holliday junction (HJ) DNA during genetic recombination and DNA repair, while the RuvA-RuvB complex plays an important role in the rescue of blocked DNA replication forks via replication fork reversal (RFR). RuvA specifically binds to HJ cruciform DNA, conferring on it an open structure. The RuvB hexamer acts as an ATP-dependent pump, pulling dsDNA into and through the RuvAB complex. HJ branch migration allows RuvC to scan DNA until it finds its consensus sequence, where it cleaves and resolves the cruciform DNA. The sequence is that of Holliday junction branch migration complex subunit RuvA from Xanthomonas axonopodis pv. citri (strain 306).